A 422-amino-acid chain; its full sequence is Tyrosine--tRNA ligase 1 (422 aa).

Y36 contributes to the L-tyrosine binding site. Positions 41–50 (PTAGSLHIGH) match the 'HIGH' region motif. Residues Y173 and Q177 each contribute to the L-tyrosine site. Positions 233–237 (KFGKT) match the 'KMSKS' region motif. K236 is a binding site for ATP. The S4 RNA-binding domain maps to 355–419 (SDVVTLLLET…GKKQFAMVKL (65 aa)).

The protein belongs to the class-I aminoacyl-tRNA synthetase family. TyrS type 1 subfamily. As to quaternary structure, homodimer.

The protein resides in the cytoplasm. The catalysed reaction is tRNA(Tyr) + L-tyrosine + ATP = L-tyrosyl-tRNA(Tyr) + AMP + diphosphate + H(+). In terms of biological role, catalyzes the attachment of tyrosine to tRNA(Tyr) in a two-step reaction: tyrosine is first activated by ATP to form Tyr-AMP and then transferred to the acceptor end of tRNA(Tyr). The chain is Tyrosine--tRNA ligase 1 from Vibrio vulnificus (strain YJ016).